The primary structure comprises 523 residues: UPF0329 protein ECU02_0050 (523 aa).

Positions 326–386 (EEKAKSKKRG…KTGKKSEGGR (61 aa)) are disordered. Over residues 330–339 (KSKKRGKRKS) the composition is skewed to basic residues. Positions 344–353 (EAKEEEKKES) are enriched in basic and acidic residues. Over residues 354 to 368 (ETEEVEAGEEVEMPS) the composition is skewed to acidic residues.

The protein belongs to the UPF0329 family.

The sequence is that of UPF0329 protein ECU02_0050 from Encephalitozoon cuniculi (strain GB-M1) (Microsporidian parasite).